A 638-amino-acid polypeptide reads, in one-letter code: Cell division control protein 45 homolog (638 aa).

The interval 151–204 is disordered; it reads ELSDEENSDSSNEREEEVEDDNRSVESYSSSDYQARSRRRFSEETTQRRAEIKE. The span at 153 to 170 shows a compositional bias: acidic residues; sequence SDEENSDSSNEREEEVED. The span at 190–204 shows a compositional bias: basic and acidic residues; the sequence is RFSEETTQRRAEIKE.

The protein belongs to the CDC45 family. Interacts with sld3.

Its subcellular location is the nucleus. In terms of biological role, required for initiation of chromosomal DNA replication. May have a role in regulating the MCM proteins nda1 and nda4. This chain is Cell division control protein 45 homolog (sna41), found in Schizosaccharomyces pombe (strain 972 / ATCC 24843) (Fission yeast).